We begin with the raw amino-acid sequence, 78 residues long: UPF0612 protein new22 (78 aa).

Belongs to the UPF0612 family.

In Schizosaccharomyces pombe (strain 972 / ATCC 24843) (Fission yeast), this protein is UPF0612 protein new22 (new22).